Here is a 110-residue protein sequence, read N- to C-terminus: Large ribosomal subunit protein uL22 (110 aa).

Belongs to the universal ribosomal protein uL22 family. As to quaternary structure, part of the 50S ribosomal subunit.

Its function is as follows. This protein binds specifically to 23S rRNA; its binding is stimulated by other ribosomal proteins, e.g. L4, L17, and L20. It is important during the early stages of 50S assembly. It makes multiple contacts with different domains of the 23S rRNA in the assembled 50S subunit and ribosome. Functionally, the globular domain of the protein is located near the polypeptide exit tunnel on the outside of the subunit, while an extended beta-hairpin is found that lines the wall of the exit tunnel in the center of the 70S ribosome. The protein is Large ribosomal subunit protein uL22 of Pectobacterium atrosepticum (strain SCRI 1043 / ATCC BAA-672) (Erwinia carotovora subsp. atroseptica).